The sequence spans 410 residues: Angiopoietin-related protein 4 (410 aa).

The signal sequence occupies residues 1 to 23; that stretch reads MRCAPTAGAALMLCAATAGLLSA. Residues 81–106 are disordered; that stretch reads KDPEGSAAPPRAQANLVNPGGGDASP. Residues 107–155 adopt a coiled-coil conformation; it reads ETLRSLKTQLEAQNSRIQQLFQKVAQQQRHLEKQQLRIQNLQSQMDHLA. N-linked (GlcNAc...) asparagine glycosylation occurs at asparagine 184. Residues 186–408 enclose the Fibrinogen C-terminal domain; that stretch reads SRLHRLPRDC…ATTILVQPTA (223 aa). 2 disulfide bridges follow: cysteine 195–cysteine 223 and cysteine 348–cysteine 361.

In terms of assembly, homooligomer; disulfide-linked via Cys residues in the N-terminal part of the protein. The homooligomer undergoes proteolytic processing to release the ANGPTL4 C-terminal chain, which circulates as a monomer. The homooligomer unprocessed form is able to interact with the extracellular matrix. N-glycosylated. In terms of processing, forms disulfide-linked dimers and tetramers. Post-translationally, cleaved into a smaller N-terminal chain and a larger chain that contains the fibrinogen C-terminal domain; both cleaved and uncleaved forms are detected in the extracellular space. The cleaved form is not present within the cell.

The protein resides in the secreted. The protein localises to the extracellular space. It localises to the extracellular matrix. Mediates inactivation of the lipoprotein lipase LPL, and thereby plays a role in the regulation of triglyceride clearance from the blood serum and in lipid metabolism. May also play a role in regulating glucose homeostasis and insulin sensitivity. Inhibits proliferation, migration, and tubule formation of endothelial cells and reduces vascular leakage. Upon heterologous expression, inhibits the adhesion of endothelial cell to the extracellular matrix (ECM), and inhibits the reorganization of the actin cytoskeleton, formation of actin stress fibers and focal adhesions in endothelial cells that have adhered to ANGPTL4-containing ECM (in vitro). Depending on context, may modulate tumor-related angiogenesis. In terms of biological role, mediates inactivation of the lipoprotein lipase LPL, and thereby plays an important role in the regulation of triglyceride clearance from the blood serum and in lipid metabolism. Has higher activity in LPL inactivation than the uncleaved protein. The sequence is that of Angiopoietin-related protein 4 (ANGPTL4) from Bos taurus (Bovine).